A 249-amino-acid polypeptide reads, in one-letter code: 1-(5-phosphoribosyl)-5-[(5-phosphoribosylamino)methylideneamino] imidazole-4-carboxamide isomerase (249 aa).

The Proton acceptor role is filled by aspartate 11. The Proton donor role is filled by aspartate 133.

It belongs to the HisA/HisF family.

It localises to the cytoplasm. The enzyme catalyses 1-(5-phospho-beta-D-ribosyl)-5-[(5-phospho-beta-D-ribosylamino)methylideneamino]imidazole-4-carboxamide = 5-[(5-phospho-1-deoxy-D-ribulos-1-ylimino)methylamino]-1-(5-phospho-beta-D-ribosyl)imidazole-4-carboxamide. It participates in amino-acid biosynthesis; L-histidine biosynthesis; L-histidine from 5-phospho-alpha-D-ribose 1-diphosphate: step 4/9. This is 1-(5-phosphoribosyl)-5-[(5-phosphoribosylamino)methylideneamino] imidazole-4-carboxamide isomerase from Haemophilus influenzae (strain 86-028NP).